The primary structure comprises 434 residues: 3-phosphoshikimate 1-carboxyvinyltransferase (434 aa).

Residues lysine 15, serine 16, and arginine 20 each contribute to the 3-phosphoshikimate site. Lysine 15 provides a ligand contact to phosphoenolpyruvate. Residues glycine 96 and arginine 124 each coordinate phosphoenolpyruvate. 3-phosphoshikimate-binding residues include serine 169, glutamine 171, serine 195, aspartate 319, and lysine 346. Residue glutamine 171 coordinates phosphoenolpyruvate. The Proton acceptor role is filled by aspartate 319. 2 residues coordinate phosphoenolpyruvate: arginine 350 and arginine 394.

The protein belongs to the EPSP synthase family. In terms of assembly, monomer.

Its subcellular location is the cytoplasm. It carries out the reaction 3-phosphoshikimate + phosphoenolpyruvate = 5-O-(1-carboxyvinyl)-3-phosphoshikimate + phosphate. Its pathway is metabolic intermediate biosynthesis; chorismate biosynthesis; chorismate from D-erythrose 4-phosphate and phosphoenolpyruvate: step 6/7. Its function is as follows. Catalyzes the transfer of the enolpyruvyl moiety of phosphoenolpyruvate (PEP) to the 5-hydroxyl of shikimate-3-phosphate (S3P) to produce enolpyruvyl shikimate-3-phosphate and inorganic phosphate. The chain is 3-phosphoshikimate 1-carboxyvinyltransferase from Prosthecochloris aestuarii (strain DSM 271 / SK 413).